We begin with the raw amino-acid sequence, 151 residues long: Transcriptional regulator MraZ (151 aa).

2 SpoVT-AbrB domains span residues 5–51 (AHEL…PVAE) and 81–124 (AEIL…GREQ).

Belongs to the MraZ family. As to quaternary structure, forms oligomers.

The protein localises to the cytoplasm. The protein resides in the nucleoid. This Neisseria gonorrhoeae (strain ATCC 700825 / FA 1090) protein is Transcriptional regulator MraZ.